The following is a 263-amino-acid chain: Protein YpjB (263 aa).

Over residues 233 to 244 (DFDDSSSEDDPV) the composition is skewed to acidic residues. The interval 233–263 (DFDDSSSEDDPVENSPVVTSPVVSSSKSSFQ) is disordered. Over residues 245–263 (ENSPVVTSPVVSSSKSSFQ) the composition is skewed to low complexity.

In Escherichia coli (strain K12), this protein is Protein YpjB (ypjB).